A 149-amino-acid chain; its full sequence is Large ribosomal subunit protein eL19 (149 aa).

The segment at 46–99 (EDGTIEAKTAKGNSRGRARKRQQKRAYGHKKGHGSRKGRSGGRQNEKEDWQSRI) is disordered. A compositionally biased stretch (basic residues) spans 59–85 (SRGRARKRQQKRAYGHKKGHGSRKGRS). Basic and acidic residues predominate over residues 89–99 (QNEKEDWQSRI).

It belongs to the eukaryotic ribosomal protein eL19 family. Part of the 50S ribosomal subunit.

In terms of biological role, binds to the 23S rRNA. This chain is Large ribosomal subunit protein eL19, found in Natronomonas pharaonis (strain ATCC 35678 / DSM 2160 / CIP 103997 / JCM 8858 / NBRC 14720 / NCIMB 2260 / Gabara) (Halobacterium pharaonis).